Here is a 523-residue protein sequence, read N- to C-terminus: Calcium-dependent protein kinase 1 (523 aa).

A disordered region spans residues 1-36 (MGCNQSKSANDVRGNKVNHVNSKKKNNKREDTNDGE). Residue Gly2 is the site of N-myristoyl glycine attachment. The S-palmitoyl cysteine moiety is linked to residue Cys3. The Protein kinase domain occupies 57–324 (YFKVRKLGSG…AEEALNSRWI (268 aa)). Residues 63-71 (LGSGAYGEV), Lys86, and Lys90 each bind ATP. Ser65 bears the Phosphoserine mark. Phosphoserine is present on Ser117. Residue Asp190 is the Proton acceptor of the active site. 2 positions are modified to phosphoserine: Ser216 and Ser219. A Phosphothreonine modification is found at Thr230. A Phosphoserine modification is found at Ser334. The J domain autoinhibitory motif motif lies at 345–352 (NMRKFEGS). The j domain stretch occupies residues 345 to 363 (NMRKFEGSQKLAQAAILFI). Positions 353–363 (QKLAQAAILFI) match the J domain interacts with the EF-hand domains motif. 4 consecutive EF-hand domains span residues 371 to 406 (EERK…LRNF), 415 to 450 (NVEE…KQIL), 451 to 486 (FSEE…TSIS), and 487 to 520 (EKTW…ICDH). Ca(2+)-binding residues include Asp384, Asn386, Asp388, Gln390, Glu395, Asp428, Asp430, Asn432, Tyr434, Glu439, Asp464, Asp466, Ser468, Lys470, Glu475, Asp498, Asn500, Asp502, Met504, and Glu509.

The protein belongs to the protein kinase superfamily. Ser/Thr protein kinase family. CDPK subfamily. In terms of assembly, monomer. Mg(2+) is required as a cofactor. In terms of processing, myristoylated. Myristoylation and palmitoylation are required for the localization to the parasitophorous vacuole membrane. Palmitoylated. Palmitoylation increases in merozoites in response to low level of extracellular K(+) in the host blood. Myristoylation and palmitoylation are required for the localization to the parasitophorous vacuole membrane. Post-translationally, phosphorylation at Thr-230 may regulate CDPK1 kinase activity. Phosphorylation increases in response to an increase in intracellular Ca(2+) levels. Autophosphorylated in vitro. Autophosphorylation does not affect membrane localization in vitro.

Its subcellular location is the membrane. The protein resides in the cell membrane. It localises to the parasitophorous vacuole membrane. The protein localises to the cytoplasm. It is found in the cell projection. Its subcellular location is the cilium. The protein resides in the flagellum. It localises to the host cell membrane. The catalysed reaction is L-seryl-[protein] + ATP = O-phospho-L-seryl-[protein] + ADP + H(+). The enzyme catalyses L-threonyl-[protein] + ATP = O-phospho-L-threonyl-[protein] + ADP + H(+). With respect to regulation, activated by calcium. Upon calcium binding to the EF-hand domains, the C-terminus of the junction domain (J domain) undergoes a conformational change which results in the dissociation of the pseudo-substrate inhibitory motif from the catalytic domain. This, in turn may facilitate the autophosphorylation of the activation loop at Thr-230, which leads to the kinase activation. In terms of biological role, calcium-dependent protein kinase which acts as a sensor and effector of intracellular Ca(2+) levels probably in part downstream of cGMP-activated PKG kinase. During the liver stage, involved in sporozoite motility and thus in sporozoite invasion of host hepatocytes, probably together with CDPK4 and CDPK5. In the mosquito midgut and during the last stage of male gamete exflagellation, may play a role in the rupture of the host erythrocyte membrane. In the mosquito midgut, required for the differentiation of the zygote into the ookinete by promoting the translational activation of a subset of repressed mRNAs; these mRNAs are kept repressed in the zygote by the DOZI- or CITH-containing mRNP complexes. Dispensable during the asexual blood stage. This is Calcium-dependent protein kinase 1 from Plasmodium berghei (strain Anka).